The following is a 486-amino-acid chain: Cardiolipin synthase A (486 aa).

A run of 2 helical transmembrane segments spans residues 3-23 and 38-58; these read TVYT…IAGV and MAWL…YLAV. PLD phosphodiesterase domains lie at 219-246 and 399-426; these read MDLR…VDPR and EGGL…DMRS. Catalysis depends on residues His224, Lys226, Asp231, His404, Lys406, and Asp411.

It belongs to the phospholipase D family. Cardiolipin synthase subfamily. ClsA sub-subfamily.

It is found in the cell inner membrane. It carries out the reaction 2 a 1,2-diacyl-sn-glycero-3-phospho-(1'-sn-glycerol) = a cardiolipin + glycerol. Functionally, catalyzes the reversible phosphatidyl group transfer from one phosphatidylglycerol molecule to another to form cardiolipin (CL) (diphosphatidylglycerol) and glycerol. The chain is Cardiolipin synthase A from Escherichia coli O157:H7 (strain EC4115 / EHEC).